The following is a 486-amino-acid chain: FAD-dependent oxidoreductase domain-containing protein 1 (486 aa).

A helical membrane pass occupies residues 66-82; sequence VVIVGGGVLGLSVAYWL.

Associates with components of the mitochondrial respiratory chain complex I. FAD serves as cofactor.

Its subcellular location is the mitochondrion inner membrane. Its function is as follows. Required for the assembly of the mitochondrial membrane respiratory chain NADH dehydrogenase (Complex I). Involved in mid-late stages of complex I assembly. This is FAD-dependent oxidoreductase domain-containing protein 1 (FOXRED1) from Bos taurus (Bovine).